Reading from the N-terminus, the 37-residue chain is Large ribosomal subunit protein bL36 (37 aa).

The protein belongs to the bacterial ribosomal protein bL36 family.

This chain is Large ribosomal subunit protein bL36, found in Desulforapulum autotrophicum (strain ATCC 43914 / DSM 3382 / VKM B-1955 / HRM2) (Desulfobacterium autotrophicum).